The primary structure comprises 85 residues: Small ribosomal subunit protein bS16 (85 aa).

The protein belongs to the bacterial ribosomal protein bS16 family.

In Pseudomonas syringae pv. tomato (strain ATCC BAA-871 / DC3000), this protein is Small ribosomal subunit protein bS16.